A 647-amino-acid chain; its full sequence is DNA mismatch repair protein MutL (647 aa).

The tract at residues 389–423 (SESSVSSVANKQQPTVKQAKRSADDSDSEHGKLDY) is disordered. The span at 409 to 423 (RSADDSDSEHGKLDY) shows a compositional bias: basic and acidic residues.

Belongs to the DNA mismatch repair MutL/HexB family.

This protein is involved in the repair of mismatches in DNA. It is required for dam-dependent methyl-directed DNA mismatch repair. May act as a 'molecular matchmaker', a protein that promotes the formation of a stable complex between two or more DNA-binding proteins in an ATP-dependent manner without itself being part of a final effector complex. This Streptococcus thermophilus (strain ATCC BAA-491 / LMD-9) protein is DNA mismatch repair protein MutL.